The primary structure comprises 222 residues: von Willebrand factor C domain-containing protein 2-like (222 aa).

The N-terminal stretch at methionine 1–serine 21 is a signal peptide. 2 VWFC domains span residues lysine 51–lysine 110 and asparagine 114–lysine 172.

Peripherally associated with AMPAR complex. AMPAR complex consists of an inner core made of 4 pore-forming GluA/GRIA proteins (GRIA1, GRIA2, GRIA3 and GRIA4) and 4 major auxiliary subunits arranged in a twofold symmetry. One of the two pairs of distinct binding sites is occupied either by CNIH2, CNIH3 or CACNG2, CACNG3. The other harbors CACNG2, CACNG3, CACNG4, CACNG8 or GSG1L. This inner core of AMPAR complex is complemented by outer core constituents binding directly to the GluA/GRIA proteins at sites distinct from the interaction sites of the inner core constituents. Outer core constituents include at least PRRT1, PRRT2, CKAMP44/SHISA9, FRRS1L and NRN1. The proteins of the inner and outer core serve as a platform for other, more peripherally associated AMPAR constituents, including VWC2L. Alone or in combination, these auxiliary subunits control the gating and pharmacology of the AMPAR complex and profoundly impact their biogenesis and protein processing. Predominantly expressed in the brain (at protein level). Also detected in bones, including femur and calvaria, heart, lung and kidney. Isoform 5 is predominant in lung and heart, compared to isoforms 1 and 3. Isoform 4 is expressed in femur and calvaria at higher levels than isoforms 1 and 5. Isoforms 1 and 4 are expressed at higher levels than isoform 5 in kidney and brain.

Its subcellular location is the secreted. The protein localises to the synapse. May play a role in neurogenesis. May promote matrix mineralization, but has been shown to weakly, but significantly inhibit BMP2 and BMP6 activity in a preosteoblastic cell line. This chain is von Willebrand factor C domain-containing protein 2-like (Vwc2l), found in Mus musculus (Mouse).